The primary structure comprises 106 residues: Large ribosomal subunit protein uL22 (106 aa).

This sequence belongs to the universal ribosomal protein uL22 family. As to quaternary structure, part of the 50S ribosomal subunit.

Its function is as follows. This protein binds specifically to 23S rRNA; its binding is stimulated by other ribosomal proteins, e.g. L4, L17, and L20. It is important during the early stages of 50S assembly. It makes multiple contacts with different domains of the 23S rRNA in the assembled 50S subunit and ribosome. In terms of biological role, the globular domain of the protein is located near the polypeptide exit tunnel on the outside of the subunit, while an extended beta-hairpin is found that lines the wall of the exit tunnel in the center of the 70S ribosome. This chain is Large ribosomal subunit protein uL22, found in Nautilia profundicola (strain ATCC BAA-1463 / DSM 18972 / AmH).